The chain runs to 345 residues: Phosphate acyltransferase (345 aa).

Belongs to the PlsX family. Homodimer. Probably interacts with PlsY.

Its subcellular location is the cytoplasm. The catalysed reaction is a fatty acyl-[ACP] + phosphate = an acyl phosphate + holo-[ACP]. It functions in the pathway lipid metabolism; phospholipid metabolism. Its function is as follows. Catalyzes the reversible formation of acyl-phosphate (acyl-PO(4)) from acyl-[acyl-carrier-protein] (acyl-ACP). This enzyme utilizes acyl-ACP as fatty acyl donor, but not acyl-CoA. The chain is Phosphate acyltransferase from Levilactobacillus brevis (strain ATCC 367 / BCRC 12310 / CIP 105137 / JCM 1170 / LMG 11437 / NCIMB 947 / NCTC 947) (Lactobacillus brevis).